Reading from the N-terminus, the 334-residue chain is Protein-methionine-sulfoxide reductase catalytic subunit MsrP (334 aa).

Positions 1–44 (MKKNQFLKESDVTAESVFFMKRRQVLKALGISAAAFSLPHAAHA) form a signal peptide, tat-type signal. Mo-molybdopterin contacts are provided by residues Asn88, 91 to 92 (YE), Cys146, Thr181, Asn233, Arg238, and 249 to 251 (GIK).

It belongs to the MsrP family. In terms of assembly, heterodimer of a catalytic subunit (MsrP) and a heme-binding subunit (MsrQ). Mo-molybdopterin serves as cofactor. In terms of processing, predicted to be exported by the Tat system. The position of the signal peptide cleavage has not been experimentally proven.

It is found in the periplasm. The enzyme catalyses L-methionyl-[protein] + a quinone + H2O = L-methionyl-(S)-S-oxide-[protein] + a quinol. It catalyses the reaction L-methionyl-[protein] + a quinone + H2O = L-methionyl-(R)-S-oxide-[protein] + a quinol. Part of the MsrPQ system that repairs oxidized periplasmic proteins containing methionine sulfoxide residues (Met-O), using respiratory chain electrons. Thus protects these proteins from oxidative-stress damage caused by reactive species of oxygen and chlorine generated by the host defense mechanisms. MsrPQ is essential for the maintenance of envelope integrity under bleach stress, rescuing a wide series of structurally unrelated periplasmic proteins from methionine oxidation, including the primary periplasmic chaperone SurA and the lipoprotein Pal. The catalytic subunit MsrP is non-stereospecific, being able to reduce both (R-) and (S-) diastereoisomers of methionine sulfoxide. This is Protein-methionine-sulfoxide reductase catalytic subunit MsrP from Escherichia coli O6:H1 (strain CFT073 / ATCC 700928 / UPEC).